The following is a 760-amino-acid chain: GLC7-interacting protein 4 (760 aa).

Disordered regions lie at residues 449–573 (KKKP…SLQS) and 593–626 (KSASTPNPSASSSLAPSPKVSSINNTSSGKSSST). 2 stretches are compositionally biased toward low complexity: residues 454–474 (ITKLPASSSPSPSPTSSASPS) and 494–506 (SSRSPSVSPVRTT). Phosphoserine occurs at positions 497 and 501. Positions 512–525 (AETKKSVVSPEKRK) are enriched in basic and acidic residues. Residues 534–554 (SSSLQSYTNKQQTSYLNSTRH) are compositionally biased toward polar residues. 2 stretches are compositionally biased toward low complexity: residues 561–573 (SKLNNQRSNSLQS) and 594–626 (SASTPNPSASSSLAPSPKVSSINNTSSGKSSST). Serine 609 carries the phosphoserine modification.

The protein belongs to the GIP4 family. In terms of assembly, interacts with GLC7.

It is found in the cytoplasm. Functionally, GLC7 phosphatase-regulatory protein involved in GLC7 subcellular redistribution and chromosome segregation. This is GLC7-interacting protein 4 (GIP4) from Saccharomyces cerevisiae (strain ATCC 204508 / S288c) (Baker's yeast).